A 181-amino-acid chain; its full sequence is Translation initiation factor IF-3 (181 aa).

This sequence belongs to the IF-3 family. As to quaternary structure, monomer.

It localises to the cytoplasm. IF-3 binds to the 30S ribosomal subunit and shifts the equilibrium between 70S ribosomes and their 50S and 30S subunits in favor of the free subunits, thus enhancing the availability of 30S subunits on which protein synthesis initiation begins. The chain is Translation initiation factor IF-3 from Mycoplasma capricolum subsp. capricolum (strain California kid / ATCC 27343 / NCTC 10154).